Here is a 75-residue protein sequence, read N- to C-terminus: MARFFRRRKFCRFTAEGVQEIDYKDVATLKNYITEAGKIVPSRITGTSAKYQRQLARAIKRSRYLALLPYTDKHQ.

Belongs to the bacterial ribosomal protein bS18 family. In terms of assembly, part of the 30S ribosomal subunit. Forms a tight heterodimer with protein bS6.

Functionally, binds as a heterodimer with protein bS6 to the central domain of the 16S rRNA, where it helps stabilize the platform of the 30S subunit. The chain is Small ribosomal subunit protein bS18 from Vibrio atlanticus (strain LGP32) (Vibrio splendidus (strain Mel32)).